A 1339-amino-acid chain; its full sequence is Receptor tyrosine-protein kinase erbB-3 (1339 aa).

Residues 1 to 19 (MSAIGTLQVLGFLLSLARG) form the signal peptide. Residues 20–641 (SEMGNSQAVC…QAEVLMSKPH (622 aa)) lie on the Extracellular side of the membrane. An N-linked (GlcNAc...) asparagine glycan is attached at Asn126. 11 disulfide bridges follow: Cys186/Cys194, Cys190/Cys202, Cys210/Cys218, Cys214/Cys226, Cys227/Cys235, Cys231/Cys243, Cys246/Cys255, Cys259/Cys286, Cys290/Cys301, Cys305/Cys320, and Cys323/Cys327. N-linked (GlcNAc...) asparagine glycosylation is present at Asn250. Asn353, Asn408, Asn414, Asn437, and Asn469 each carry an N-linked (GlcNAc...) asparagine glycan. 10 disulfide bridges follow: Cys500–Cys509, Cys504–Cys517, Cys520–Cys529, Cys533–Cys549, Cys552–Cys565, Cys556–Cys573, Cys576–Cys585, Cys589–Cys610, Cys613–Cys621, and Cys617–Cys629. The N-linked (GlcNAc...) asparagine glycan is linked to Asn522. N-linked (GlcNAc...) asparagine glycosylation occurs at Asn566. A glycan (N-linked (GlcNAc...) asparagine) is linked at Asn616. A helical membrane pass occupies residues 642–662 (LVIAVTVGLTVIFLILGGSFL). Topologically, residues 663-1339 (YWRGRRIQNK…LFPKANAQRI (677 aa)) are cytoplasmic. Ser684 is subject to Phosphoserine. One can recognise a Protein kinase domain in the interval 707 to 964 (LRKLKVLGSG…TFKELANEFT (258 aa)). ATP is bound by residues 713–721 (LGSGVFGTV), Lys740, 786–788 (QYL), and 832–837 (DLALRN). The Proton acceptor role is filled by Asp832. Ser980 carries the post-translational modification Phosphoserine. Disordered regions lie at residues 1028–1052 (LSLP…SGYM), 1077–1156 (RPIS…GNGY), and 1181–1212 (SVLG…PRPG). Positions 1185–1195 (TEEEDEDEEYE) are enriched in acidic residues.

The protein belongs to the protein kinase superfamily. Tyr protein kinase family. EGF receptor subfamily. In terms of assembly, monomer and homodimer. Heterodimer with each of the other ERBB receptors (Potential). Interacts with CSPG5, PA2G4, GRB7 and MUC1. Interacts with MYOC. Found in a ternary complex with NRG1 and ITGAV:ITGB3 or ITGA6:ITGB4. Autophosphorylated. Ligand-binding increases phosphorylation on tyrosine residues and promotes its association with the p85 subunit of phosphatidylinositol 3-kinase. In terms of tissue distribution, in the muscle, expression localizes to the synaptic sites of muscle fibers.

The protein localises to the membrane. It catalyses the reaction L-tyrosyl-[protein] + ATP = O-phospho-L-tyrosyl-[protein] + ADP + H(+). Tyrosine-protein kinase that plays an essential role as cell surface receptor for neuregulins. Binds to neuregulin-1 (NRG1) and is activated by it; ligand-binding increases phosphorylation on tyrosine residues and promotes its association with the p85 subunit of phosphatidylinositol 3-kinase. May also be activated by CSPG5. Involved in the regulation of myeloid cell differentiation. This is Receptor tyrosine-protein kinase erbB-3 (Erbb3) from Mus musculus (Mouse).